The primary structure comprises 447 residues: Alpha-1,3-mannosyl-glycoprotein 2-beta-N-acetylglucosaminyltransferase (447 aa).

The Cytoplasmic segment spans residues 1 to 6; it reads MLKKQT. A helical; Signal-anchor for type II membrane protein transmembrane segment spans residues 7–29; it reads AGLVLWGAIIFVGWNALLLLFFW. Over 30–447 the chain is Lumenal; it reads TRPAPGRLPS…TWTGYDPSWN (418 aa). A disulfide bridge connects residues cysteine 115 and cysteine 145. 4 residues coordinate substrate: arginine 117, aspartate 144, histidine 190, and aspartate 212. Aspartate 213 contributes to the Mn(2+) binding site. An intrachain disulfide couples cysteine 239 to cysteine 305. The Proton acceptor role is filled by aspartate 291. Serine 322 contacts substrate.

This sequence belongs to the glycosyltransferase 13 family. In terms of assembly, interacts with MGAT4D. Interacts with BRI3. The cofactor is Mn(2+). In terms of tissue distribution, detected in kidney, liver and brain.

The protein localises to the golgi apparatus membrane. It is found in the cytoplasm. Its subcellular location is the perinuclear region. It carries out the reaction N(4)-(alpha-D-Man-(1-&gt;3)-[alpha-D-Man-(1-&gt;3)-[alpha-D-Man-(1-&gt;6)]-alpha-D-Man-(1-&gt;6)]-beta-D-Man-(1-&gt;4)-beta-D-GlcNAc-(1-&gt;4)-beta-D-GlcNAc)-L-asparaginyl-[protein] (N-glucan mannose isomer 5A1,2) + UDP-N-acetyl-alpha-D-glucosamine = N(4)-{beta-D-GlcNAc-(1-&gt;2)-alpha-D-Man-(1-&gt;3)-[alpha-D-Man-(1-&gt;3)-[alpha-D-Man-(1-&gt;6)]-alpha-D-Man-(1-&gt;6)]-beta-D-Man-(1-&gt;4)-beta-D-GlcNAc-(1-&gt;4)-beta-D-GlcNAc}-L-asparaginyl-[protein] + UDP + H(+). Its pathway is protein modification; protein glycosylation. Functionally, initiates complex N-linked carbohydrate formation. Essential for the conversion of high-mannose to hybrid and complex N-glycans. This is Alpha-1,3-mannosyl-glycoprotein 2-beta-N-acetylglucosaminyltransferase (Mgat1) from Mus musculus (Mouse).